The primary structure comprises 334 residues: Mevalonate kinase (334 aa).

110–120 (PVGAGLGSSAA) lines the ATP pocket. Asp-161 serves as the catalytic Proton acceptor.

The protein belongs to the GHMP kinase family. Mevalonate kinase subfamily. Homodimer. It depends on Mg(2+) as a cofactor.

It is found in the cytoplasm. The enzyme catalyses (R)-mevalonate + ATP = (R)-5-phosphomevalonate + ADP + H(+). It participates in isoprenoid biosynthesis; isopentenyl diphosphate biosynthesis via mevalonate pathway; isopentenyl diphosphate from (R)-mevalonate: step 1/3. In terms of biological role, catalyzes the phosphorylation of (R)-mevalonate (MVA) to (R)-mevalonate 5-phosphate (MVAP). Functions in the mevalonate (MVA) pathway leading to isopentenyl diphosphate (IPP), a key precursor for the biosynthesis of isoprenoid compounds such as archaeal membrane lipids. In Thermococcus onnurineus (strain NA1), this protein is Mevalonate kinase.